The chain runs to 693 residues: Protein arginine N-methyltransferase 7 (693 aa).

SAM-dependent MTase PRMT-type domains follow at residues 14-345 (SLEW…YCVW) and 358-684 (SAYQ…ITME). An Omega-N-methylarginine modification is found at R32. Active-site residues include E144 and E153.

The protein belongs to the class I-like SAM-binding methyltransferase superfamily. Protein arginine N-methyltransferase family. PRMT7 subfamily. As to quaternary structure, homodimer and heterodimer. Interacts with CTCFL, PRMT5 and SNRPD3.

It localises to the cytoplasm. The protein localises to the cytosol. The protein resides in the nucleus. The catalysed reaction is L-arginyl-[protein] + S-adenosyl-L-methionine = N(omega)-methyl-L-arginyl-[protein] + S-adenosyl-L-homocysteine + H(+). In terms of biological role, arginine methyltransferase that can both catalyze the formation of omega-N monomethylarginine (MMA) and symmetrical dimethylarginine (sDMA), with a preference for the formation of MMA. Specifically mediates the symmetrical dimethylation of arginine residues in the small nuclear ribonucleoproteins Sm D1 (SNRPD1) and Sm D3 (SNRPD3); such methylation being required for the assembly and biogenesis of snRNP core particles. Specifically mediates the symmetric dimethylation of histone H4 'Arg-3' to form H4R3me2s. Plays a role in gene imprinting by being recruited by CTCFL at the H19 imprinted control region (ICR) and methylating histone H4 to form H4R3me2s, possibly leading to recruit DNA methyltransferases at these sites. May also play a role in embryonic stem cell (ESC) pluripotency. Also able to mediate the arginine methylation of histone H2A and myelin basic protein (MBP) in vitro; the relevance of such results is however unclear in vivo. In Rattus norvegicus (Rat), this protein is Protein arginine N-methyltransferase 7 (Prmt7).